Reading from the N-terminus, the 481-residue chain is UDP-N-acetylmuramoyl-L-alanyl-D-glutamate--L-lysine ligase (481 aa).

Ser-42 contacts UDP-N-acetyl-alpha-D-muramoyl-L-alanyl-D-glutamate. 118-124 contributes to the ATP binding site; sequence GTKGKTT. UDP-N-acetyl-alpha-D-muramoyl-L-alanyl-D-glutamate-binding positions include 160–161, Ser-187, and Arg-195; that span reads TT. The residue at position 229 (Lys-229) is an N6-carboxylysine. The L-lysine recognition motif motif lies at 404 to 407; it reads DDPN.

Belongs to the MurCDEF family. MurE subfamily. In terms of processing, carboxylation is probably crucial for Mg(2+) binding and, consequently, for the gamma-phosphate positioning of ATP.

It localises to the cytoplasm. It carries out the reaction UDP-N-acetyl-alpha-D-muramoyl-L-alanyl-D-glutamate + L-lysine + ATP = UDP-N-acetyl-alpha-D-muramoyl-L-alanyl-gamma-D-glutamyl-L-lysine + ADP + phosphate + H(+). It functions in the pathway cell wall biogenesis; peptidoglycan biosynthesis. Its function is as follows. Catalyzes the addition of L-lysine to the nucleotide precursor UDP-N-acetylmuramoyl-L-alanyl-D-glutamate (UMAG) in the biosynthesis of bacterial cell-wall peptidoglycan. This Streptococcus pneumoniae (strain ATCC BAA-255 / R6) protein is UDP-N-acetylmuramoyl-L-alanyl-D-glutamate--L-lysine ligase.